A 67-amino-acid chain; its full sequence is Beta-defensin 123 (67 aa).

The N-terminal stretch at 1–20 (MKLLLLTLTVLLLLSQLTPG) is a signal peptide. Intrachain disulfides connect cysteine 25–cysteine 52, cysteine 32–cysteine 46, and cysteine 36–cysteine 53.

Belongs to the beta-defensin family.

It localises to the secreted. Its function is as follows. Has antibacterial activity. The sequence is that of Beta-defensin 123 (DEFB123) from Pongo pygmaeus (Bornean orangutan).